The primary structure comprises 85 residues: MKVTLIAILTCAAVLVLHTTAAEELEAEGQLMEVGMPDTELAAVDEERLFECSVSCEIEKEGNKDCKKKKCKGGWKCKFNMCVKV.

Positions M1–A22 are cleaved as a signal peptide. Residues E23 to R48 constitute a propeptide that is removed on maturation. 3 disulfide bridges follow: C52–C66, C56–C77, and C71–C82.

It belongs to the neurotoxin 12 (Hwtx-2) family. 02 (Hwtx-2) subfamily. In terms of assembly, monomer. As to expression, expressed by the venom gland.

It localises to the secreted. Functionally, neurotoxin active on both insects and mammals. This Cyriopagopus hainanus (Chinese bird spider) protein is U4-theraphotoxin-Hhn1a.